Consider the following 415-residue polypeptide: Putative glutamate--cysteine ligase 2 (415 aa).

The protein belongs to the glutamate--cysteine ligase type 2 family. YbdK subfamily.

It catalyses the reaction L-cysteine + L-glutamate + ATP = gamma-L-glutamyl-L-cysteine + ADP + phosphate + H(+). In terms of biological role, ATP-dependent carboxylate-amine ligase which exhibits weak glutamate--cysteine ligase activity. This chain is Putative glutamate--cysteine ligase 2, found in Bordetella petrii (strain ATCC BAA-461 / DSM 12804 / CCUG 43448).